The sequence spans 158 residues: Cyclic pyranopterin monophosphate synthase (158 aa).

Substrate contacts are provided by residues 75-77 and 113-114; these read LCH and ME. Asp128 is a catalytic residue.

Belongs to the MoaC family. Homohexamer; trimer of dimers.

The catalysed reaction is (8S)-3',8-cyclo-7,8-dihydroguanosine 5'-triphosphate = cyclic pyranopterin phosphate + diphosphate. Its pathway is cofactor biosynthesis; molybdopterin biosynthesis. In terms of biological role, catalyzes the conversion of (8S)-3',8-cyclo-7,8-dihydroguanosine 5'-triphosphate to cyclic pyranopterin monophosphate (cPMP). In Actinobacillus pleuropneumoniae serotype 5b (strain L20), this protein is Cyclic pyranopterin monophosphate synthase.